The following is a 1792-amino-acid chain: D-lysergyl-peptide-synthetase subunit 3 (1792 aa).

An adenylation (A) domain region spans residues 239 to 642 (FRQRCDLHPN…GRKDSQIKIR (404 aa)). The region spanning 779-853 (SNEEHRLQRM…DLARKASQSV (75 aa)) is the Carrier domain. S813 bears the O-(pantetheine 4'-phosphoryl)serine mark. The segment at 895–1285 (EDIYPCTPMQ…HILGQIHGKE (391 aa)) is condensation (C) domain. Positions 1415-1640 (VTGANGFIGT…AGEFNSSAGS (226 aa)) are reductase (R) domain.

This sequence belongs to the NRP synthetase family.

It participates in alkaloid biosynthesis; ergot alkaloid biosynthesis. In terms of biological role, D-lysergyl-peptide-synthetase subunit 3; part of the gene cluster that mediates the biosynthesis of fungal ergot alkaloid. DmaW catalyzes the first step of ergot alkaloid biosynthesis by condensing dimethylallyl diphosphate (DMAP) and tryptophan to form 4-dimethylallyl-L-tryptophan. The second step is catalyzed by the methyltransferase easF that methylates 4-dimethylallyl-L-tryptophan in the presence of S-adenosyl-L-methionine, resulting in the formation of 4-dimethylallyl-L-abrine. The catalase easC and the FAD-dependent oxidoreductase easE then transform 4-dimethylallyl-L-abrine to chanoclavine-I which is further oxidized by easD in the presence of NAD(+), resulting in the formation of chanoclavine-I aldehyde. Agroclavine dehydrogenase easG then mediates the conversion of chanoclavine-I aldehyde to agroclavine via a non-enzymatic adduct reaction: the substrate is an iminium intermediate that is formed spontaneously from chanoclavine-I aldehyde in the presence of glutathione. The presence of easA is not required to complete this reaction. Further conversion of agroclavine to paspalic acid is a two-step process involving oxidation of agroclavine to elymoclavine and of elymoclavine to paspalic acid, the second step being performed by the elymoclavine oxidase cloA. Paspalic acid is then further converted to D-lysergic acid. Ergopeptines are assembled from D-lysergic acid and three different amino acids by the D-lysergyl-peptide-synthetases composed each of a monomudular and a trimodular nonribosomal peptide synthetase subunit. LpsB and lpsC encode the monomodular subunits responsible for D-lysergic acid activation and incorporation into the ergopeptine backbone. LpsA1 and A2 subunits encode the trimodular nonribosomal peptide synthetase assembling the tripeptide portion of ergopeptines. LpsA1 is responsible for formation of the major ergopeptine, ergotamine, and lpsA2 for alpha-ergocryptine, the minor ergopeptine of the total alkaloid mixture elaborated by C.purpurea. D-lysergyl-tripeptides are assembled by the nonribosomal peptide synthetases and released as N-(D-lysergyl-aminoacyl)-lactams. Cyclolization of the D-lysergyl-tripeptides is performed by the Fe(2+)/2-ketoglutarate-dependent dioxygenase easH which introduces a hydroxyl group into N-(D-lysergyl-aminoacyl)-lactam at alpha-C of the aminoacyl residue followed by spontaneous condensation with the terminal lactam carbonyl group. The polypeptide is D-lysergyl-peptide-synthetase subunit 3 (Claviceps purpurea (strain 20.1) (Ergot fungus)).